The following is a 248-amino-acid chain: DNA repair protein RecO (248 aa).

Belongs to the RecO family.

Functionally, involved in DNA repair and RecF pathway recombination. The protein is DNA repair protein RecO of Bacillus cytotoxicus (strain DSM 22905 / CIP 110041 / 391-98 / NVH 391-98).